The sequence spans 222 residues: Probable transaldolase (222 aa).

The active-site Schiff-base intermediate with substrate is lysine 83.

The protein belongs to the transaldolase family. Type 3B subfamily.

Its subcellular location is the cytoplasm. It carries out the reaction D-sedoheptulose 7-phosphate + D-glyceraldehyde 3-phosphate = D-erythrose 4-phosphate + beta-D-fructose 6-phosphate. It participates in carbohydrate degradation; pentose phosphate pathway; D-glyceraldehyde 3-phosphate and beta-D-fructose 6-phosphate from D-ribose 5-phosphate and D-xylulose 5-phosphate (non-oxidative stage): step 2/3. In terms of biological role, transaldolase is important for the balance of metabolites in the pentose-phosphate pathway. The protein is Probable transaldolase of Nitrosopumilus maritimus (strain SCM1).